The sequence spans 78 residues: Acyl carrier protein AcpP (78 aa).

A Carrier domain is found at 2–77 (SDTAERVKKI…DAVKYIDKAS (76 aa)). O-(pantetheine 4'-phosphoryl)serine is present on serine 37.

It belongs to the acyl carrier protein (ACP) family. 4'-phosphopantetheine is transferred from CoA to a specific serine of apo-ACP by AcpS. This modification is essential for activity because fatty acids are bound in thioester linkage to the sulfhydryl of the prosthetic group.

Its subcellular location is the cytoplasm. Its pathway is lipid metabolism; fatty acid biosynthesis. Its function is as follows. Carrier of the growing fatty acid chain in fatty acid biosynthesis. This Mesorhizobium japonicum (strain LMG 29417 / CECT 9101 / MAFF 303099) (Mesorhizobium loti (strain MAFF 303099)) protein is Acyl carrier protein AcpP.